Here is a 37-residue protein sequence, read N- to C-terminus: Omega-sparatoxin-Hv1a (37 aa).

Disulfide bonds link Cys-4–Cys-18, Cys-11–Cys-23, and Cys-17–Cys-33.

As to expression, expressed by the venom gland.

Its subcellular location is the secreted. Blocks calcium channels (Cav). The sequence is that of Omega-sparatoxin-Hv1a from Heteropoda venatoria (Brown huntsman spider).